Here is a 134-residue protein sequence, read N- to C-terminus: D-xylulose reductase (134 aa).

The disordered stretch occupies residues 31 to 115 (PATTTXYKXQ…XXQXDKIGRY (85 aa)). Residues 50 to 59 (QTHEGTHQDV) show a composition bias toward basic and acidic residues.

This sequence belongs to the zinc-containing alcohol dehydrogenase family.

It catalyses the reaction xylitol + NAD(+) = D-xylulose + NADH + H(+). With respect to regulation, activated by calcium and inhibited by zinc. This Sus scrofa (Pig) protein is D-xylulose reductase.